Consider the following 178-residue polypeptide: Large ribosomal subunit protein uL6 (178 aa).

This sequence belongs to the universal ribosomal protein uL6 family. Part of the 50S ribosomal subunit.

This protein binds to the 23S rRNA, and is important in its secondary structure. It is located near the subunit interface in the base of the L7/L12 stalk, and near the tRNA binding site of the peptidyltransferase center. The sequence is that of Large ribosomal subunit protein uL6 from Symbiobacterium thermophilum (strain DSM 24528 / JCM 14929 / IAM 14863 / T).